The primary structure comprises 199 residues: Prolactin-2 (199 aa).

Intrachain disulfides connect C4–C11, C58–C174, and C191–C199.

This sequence belongs to the somatotropin/prolactin family.

It is found in the secreted. The chain is Prolactin-2 from Alligator mississippiensis (American alligator).